A 158-amino-acid polypeptide reads, in one-letter code: 6,7-dimethyl-8-ribityllumazine synthase (158 aa).

Residues Phe-22, 57–59, and 81–83 each bind 5-amino-6-(D-ribitylamino)uracil; these read AFE and AVI. 86–87 contributes to the (2S)-2-hydroxy-3-oxobutyl phosphate binding site; it reads GT. The active-site Proton donor is the His-89. Phe-114 provides a ligand contact to 5-amino-6-(D-ribitylamino)uracil. (2S)-2-hydroxy-3-oxobutyl phosphate is bound at residue Arg-128.

This sequence belongs to the DMRL synthase family. In terms of assembly, forms an icosahedral capsid composed of 60 subunits, arranged as a dodecamer of pentamers.

The catalysed reaction is (2S)-2-hydroxy-3-oxobutyl phosphate + 5-amino-6-(D-ribitylamino)uracil = 6,7-dimethyl-8-(1-D-ribityl)lumazine + phosphate + 2 H2O + H(+). Its pathway is cofactor biosynthesis; riboflavin biosynthesis; riboflavin from 2-hydroxy-3-oxobutyl phosphate and 5-amino-6-(D-ribitylamino)uracil: step 1/2. Its function is as follows. Catalyzes the formation of 6,7-dimethyl-8-ribityllumazine by condensation of 5-amino-6-(D-ribitylamino)uracil with 3,4-dihydroxy-2-butanone 4-phosphate. This is the penultimate step in the biosynthesis of riboflavin. The sequence is that of 6,7-dimethyl-8-ribityllumazine synthase from Shewanella amazonensis (strain ATCC BAA-1098 / SB2B).